A 214-amino-acid polypeptide reads, in one-letter code: Adenylate kinase (214 aa).

Residue 10 to 15 coordinates ATP; it reads GVGKGT. The interval 30–59 is NMP; the sequence is STGDILRAAVKELTPMGAKAKGYMDSGALV. Residues Thr-31, Arg-36, 57 to 59, 85 to 88, and Gln-92 each bind AMP; these read ALV and GFPR. Residues 126-163 are LID; sequence GRRACANCGAGYHVDFAPSKVAGVCDACSGQLVQREDD. Arg-127 lines the ATP pocket. Zn(2+) contacts are provided by Cys-130, Cys-133, Cys-150, and Cys-153. The AMP site is built by Arg-160 and Arg-171. Gly-199 provides a ligand contact to ATP.

Belongs to the adenylate kinase family. In terms of assembly, monomer.

It localises to the cytoplasm. The enzyme catalyses AMP + ATP = 2 ADP. Its pathway is purine metabolism; AMP biosynthesis via salvage pathway; AMP from ADP: step 1/1. Functionally, catalyzes the reversible transfer of the terminal phosphate group between ATP and AMP. Plays an important role in cellular energy homeostasis and in adenine nucleotide metabolism. In Geobacter sp. (strain M21), this protein is Adenylate kinase.